We begin with the raw amino-acid sequence, 513 residues long: Glucose-1-phosphate adenylyltransferase small subunit, chloroplastic/amyloplastic (513 aa).

A chloroplast-targeting transit peptide spans 1–64 (MAMAAAASPS…RRPFFFSPRA (64 aa)).

The protein belongs to the bacterial/plant glucose-1-phosphate adenylyltransferase family. As to quaternary structure, heterotetramer. As to expression, leaves and starchy endosperm.

The protein resides in the plastid. It localises to the chloroplast. The protein localises to the amyloplast. It carries out the reaction alpha-D-glucose 1-phosphate + ATP + H(+) = ADP-alpha-D-glucose + diphosphate. Its pathway is glycan biosynthesis; starch biosynthesis. Activated by 3'phosphoglycerate, inhibited by orthophosphate. Allosteric regulation. Functionally, this protein plays a role in synthesis of starch. It catalyzes the synthesis of the activated glycosyl donor, ADP-glucose from Glc-1-P and ATP. This is Glucose-1-phosphate adenylyltransferase small subunit, chloroplastic/amyloplastic from Hordeum vulgare (Barley).